A 323-amino-acid polypeptide reads, in one-letter code: tRNA(Ile)-lysidine synthase (323 aa).

S33 to S38 contacts ATP.

Belongs to the tRNA(Ile)-lysidine synthase family.

It is found in the cytoplasm. It catalyses the reaction cytidine(34) in tRNA(Ile2) + L-lysine + ATP = lysidine(34) in tRNA(Ile2) + AMP + diphosphate + H(+). In terms of biological role, ligates lysine onto the cytidine present at position 34 of the AUA codon-specific tRNA(Ile) that contains the anticodon CAU, in an ATP-dependent manner. Cytidine is converted to lysidine, thus changing the amino acid specificity of the tRNA from methionine to isoleucine. This is tRNA(Ile)-lysidine synthase from Mycobacterium leprae (strain TN).